The chain runs to 342 residues: S-adenosylmethionine:tRNA ribosyltransferase-isomerase (342 aa).

This sequence belongs to the QueA family. Monomer.

It is found in the cytoplasm. It catalyses the reaction 7-aminomethyl-7-carbaguanosine(34) in tRNA + S-adenosyl-L-methionine = epoxyqueuosine(34) in tRNA + adenine + L-methionine + 2 H(+). It functions in the pathway tRNA modification; tRNA-queuosine biosynthesis. Its function is as follows. Transfers and isomerizes the ribose moiety from AdoMet to the 7-aminomethyl group of 7-deazaguanine (preQ1-tRNA) to give epoxyqueuosine (oQ-tRNA). This chain is S-adenosylmethionine:tRNA ribosyltransferase-isomerase, found in Listeria monocytogenes serotype 4b (strain F2365).